Here is a 476-residue protein sequence, read N- to C-terminus: Glucose-1-phosphate adenylyltransferase (476 aa).

Alpha-D-glucose 1-phosphate-binding positions include Tyr114, Gly179, 194–195 (EK), and Ser212.

Belongs to the bacterial/plant glucose-1-phosphate adenylyltransferase family. Homotetramer.

The enzyme catalyses alpha-D-glucose 1-phosphate + ATP + H(+) = ADP-alpha-D-glucose + diphosphate. It functions in the pathway glycan biosynthesis; glycogen biosynthesis. Involved in the biosynthesis of ADP-glucose, a building block required for the elongation reactions to produce glycogen. Catalyzes the reaction between ATP and alpha-D-glucose 1-phosphate (G1P) to produce pyrophosphate and ADP-Glc. This is Glucose-1-phosphate adenylyltransferase from Yersinia pestis bv. Antiqua (strain Antiqua).